The following is a 209-amino-acid chain: Thymidylate kinase (209 aa).

Residue 13 to 20 (GLEGAGKS) participates in ATP binding.

This sequence belongs to the thymidylate kinase family.

The catalysed reaction is dTMP + ATP = dTDP + ADP. Functionally, phosphorylation of dTMP to form dTDP in both de novo and salvage pathways of dTTP synthesis. This Shewanella sp. (strain MR-4) protein is Thymidylate kinase.